Consider the following 294-residue polypeptide: Histone deacetylase HDT3 (294 aa).

At methionine 1 the chain carries N-acetylmethionine. The required to repress transcription stretch occupies residues 2-5 (EFWG). Residues 124–269 (QVNFQLPNED…TPKSAGAFGC (146 aa)) are disordered. Acidic residues predominate over residues 140–188 (DDADGSEEDSSDDDDSENSGDEEEEKVTAESDSEEDDSSDDEEDDSSEE). Residues 189-202 (ETPKKPEEPKKRSA) are compositionally biased toward basic and acidic residues. A compositionally biased stretch (low complexity) spans 203–213 (EPNSSKNPASN). Over residues 252–262 (GETSKQQQTPK) the composition is skewed to polar residues. Residues 267–290 (FGCKSCTRTFTSEMGLQSHTKAKH) form a C2H2-type zinc finger.

It belongs to the histone deacetylase HD2 family. Interacts with DNMT2. Expressed in leaves, roots, stems, young plantlets, flowers and siliques. Highest levels in ovules, embryos, shoot apical meristems and first leaves. Also expressed in somatic embryos.

The protein localises to the nucleus. It is found in the nucleolus. In terms of biological role, probably mediates the deacetylation of lysine residues on the N-terminal part of the core histones (H2A, H2B, H3 and H4). Histone deacetylation gives a tag for epigenetic repression and plays an important role in transcriptional regulation, cell cycle progression and developmental events. Involved in the modulation of abscisic acid and stress-responsive genes. The sequence is that of Histone deacetylase HDT3 (HDT3) from Arabidopsis thaliana (Mouse-ear cress).